The sequence spans 88 residues: HssA/B-like protein 13 (88 aa).

The protein belongs to the hssA/B family.

The chain is HssA/B-like protein 13 (hssl13) from Dictyostelium discoideum (Social amoeba).